The primary structure comprises 367 residues: Succinyl-diaminopimelate desuccinylase (367 aa).

Histidine 67 serves as a coordination point for Zn(2+). Residue aspartate 69 is part of the active site. Position 98 (aspartate 98) interacts with Zn(2+). The active-site Proton acceptor is glutamate 128. Zn(2+) is bound by residues glutamate 129, glutamate 157, and histidine 342.

This sequence belongs to the peptidase M20A family. DapE subfamily. As to quaternary structure, homodimer. It depends on Zn(2+) as a cofactor. Co(2+) serves as cofactor.

It carries out the reaction N-succinyl-(2S,6S)-2,6-diaminopimelate + H2O = (2S,6S)-2,6-diaminopimelate + succinate. It functions in the pathway amino-acid biosynthesis; L-lysine biosynthesis via DAP pathway; LL-2,6-diaminopimelate from (S)-tetrahydrodipicolinate (succinylase route): step 3/3. In terms of biological role, catalyzes the hydrolysis of N-succinyl-L,L-diaminopimelic acid (SDAP), forming succinate and LL-2,6-diaminopimelate (DAP), an intermediate involved in the bacterial biosynthesis of lysine and meso-diaminopimelic acid, an essential component of bacterial cell walls. The polypeptide is Succinyl-diaminopimelate desuccinylase (Campylobacter hominis (strain ATCC BAA-381 / DSM 21671 / CCUG 45161 / LMG 19568 / NCTC 13146 / CH001A)).